We begin with the raw amino-acid sequence, 126 residues long: Large ribosomal subunit protein uL22 (126 aa).

The protein belongs to the universal ribosomal protein uL22 family. Part of the 50S ribosomal subunit.

In terms of biological role, this protein binds specifically to 23S rRNA; its binding is stimulated by other ribosomal proteins, e.g. L4, L17, and L20. It is important during the early stages of 50S assembly. It makes multiple contacts with different domains of the 23S rRNA in the assembled 50S subunit and ribosome. Functionally, the globular domain of the protein is located near the polypeptide exit tunnel on the outside of the subunit, while an extended beta-hairpin is found that lines the wall of the exit tunnel in the center of the 70S ribosome. In Phenylobacterium zucineum (strain HLK1), this protein is Large ribosomal subunit protein uL22.